The primary structure comprises 473 residues: GTPase Der (473 aa).

2 consecutive EngA-type G domains span residues 3–167 (FTVA…GEDR) and 203–378 (LRVA…KVWN). GTP-binding positions include 9-16 (GRPNVGKS), 56-60 (DTAGL), 119-122 (NKSE), 209-216 (GRPNAGKS), 256-260 (DTAGM), and 321-324 (NKWD). Residues 379–463 (KRISTARLNR…PIRIHFRSPD (85 aa)) form the KH-like domain.

It belongs to the TRAFAC class TrmE-Era-EngA-EngB-Septin-like GTPase superfamily. EngA (Der) GTPase family. As to quaternary structure, associates with the 50S ribosomal subunit.

Its function is as follows. GTPase that plays an essential role in the late steps of ribosome biogenesis. This chain is GTPase Der, found in Rhizobium johnstonii (strain DSM 114642 / LMG 32736 / 3841) (Rhizobium leguminosarum bv. viciae).